We begin with the raw amino-acid sequence, 288 residues long: ATP synthase gamma chain (288 aa).

The protein belongs to the ATPase gamma chain family. F-type ATPases have 2 components, CF(1) - the catalytic core - and CF(0) - the membrane proton channel. CF(1) has five subunits: alpha(3), beta(3), gamma(1), delta(1), epsilon(1). CF(0) has three main subunits: a, b and c.

The protein localises to the cell inner membrane. Its function is as follows. Produces ATP from ADP in the presence of a proton gradient across the membrane. The gamma chain is believed to be important in regulating ATPase activity and the flow of protons through the CF(0) complex. The sequence is that of ATP synthase gamma chain from Rickettsia bellii (strain OSU 85-389).